A 407-amino-acid chain; its full sequence is MTQRVFQVWKGSNKFILGGRLIFGPDARSLPLTLLLIIVPVVLFCVFVARHLRHEFSPYNAGYAIMVVAILFTIYVLILLFFTSARDPGIVPRNSHPPEEDLRYETTVSADGRQTPSVQIPRTKEVIVNGVSVRVKYCDTCMLYRPPRCSHCSICNNCVERFDHHCPWVGQCIGLRNYRYFFMFVSSSTLLCIYIFSMSAVYIKILMDHQQATVWRAMKESPWAVVLMIYCFIALWFVGGLTAFHLYLISTNQTTYEKLRYRSSHSRSIVYNRGCPNNFLEVFCSKVKPSRNNFRAFIEEEPPRVITLPSTTRESGEAEDENVTRRQKVEDDLDIGDDLMNLSRRCNAEDANNNQPHHTLDIDHERAGSIRTEARHESWGRRSGSWDVAATDVRESRSYATAKDGRG.

The next 2 membrane-spanning stretches (helical) occupy residues 29-49 (SLPL…VFVA) and 62-82 (GYAI…LLFF). The DHHC domain maps to 136-186 (KYCDTCMLYRPPRCSHCSICNNCVERFDHHCPWVGQCIGLRNYRYFFMFVS). The active-site S-palmitoyl cysteine intermediate is the C166. Transmembrane regions (helical) follow at residues 181–201 (FFMF…MSAV) and 224–244 (AVVL…LTAF). A disordered region spans residues 348–368 (AEDANNNQPHHTLDIDHERAG). Residues 358–368 (HTLDIDHERAG) are compositionally biased toward basic and acidic residues. A Phosphoserine modification is found at S385.

This sequence belongs to the DHHC palmitoyltransferase family. Expressed in flowers and pollen.

It is found in the cell membrane. It catalyses the reaction L-cysteinyl-[protein] + hexadecanoyl-CoA = S-hexadecanoyl-L-cysteinyl-[protein] + CoA. Its function is as follows. S-acyltransferase involved in protein lipid modification. The sequence is that of Protein S-acyltransferase 8 (PAT08) from Arabidopsis thaliana (Mouse-ear cress).